The chain runs to 424 residues: Histidinol dehydrogenase (424 aa).

Tyr121, Gln183, and Asn206 together coordinate NAD(+). Substrate-binding residues include Ser229, Gln251, and His254. Positions 251 and 254 each coordinate Zn(2+). Catalysis depends on proton acceptor residues Glu319 and His320. Substrate-binding residues include His320, Asp353, Glu407, and His412. Residue Asp353 coordinates Zn(2+). Residue His412 coordinates Zn(2+).

The protein belongs to the histidinol dehydrogenase family. Zn(2+) serves as cofactor.

It carries out the reaction L-histidinol + 2 NAD(+) + H2O = L-histidine + 2 NADH + 3 H(+). Its pathway is amino-acid biosynthesis; L-histidine biosynthesis; L-histidine from 5-phospho-alpha-D-ribose 1-diphosphate: step 9/9. Catalyzes the sequential NAD-dependent oxidations of L-histidinol to L-histidinaldehyde and then to L-histidine. This is Histidinol dehydrogenase from Geobacillus kaustophilus (strain HTA426).